We begin with the raw amino-acid sequence, 130 residues long: Spore coat protein M (130 aa).

Its function is as follows. Involved in spore outer coat assembly. May be part of a cross-linked insoluble skeleton that surrounds the spore, serves as a matrix for the assembly of additional outer coat material, and confers structural stability to the final structure. The sequence is that of Spore coat protein M (cotM) from Bacillus subtilis (strain 168).